Consider the following 132-residue polypeptide: Secreted RxLR effector protein RXLR-C22 (132 aa).

Residues 1–21 (MRSLVWAVIATLIVLTPFSEA) form the signal peptide. A RxLR-dEER motif is present at residues 56 to 74 (RKLQSDSVKKGDSTGLEER). N-linked (GlcNAc...) asparagine glycosylation is present at Asn-116.

This sequence belongs to the RxLR effector family.

It is found in the secreted. The protein localises to the host Golgi apparatus. Secreted effector that does not suppress pattern-triggered immunity (PTI) in plant host. In Plasmopara halstedii (Downy mildew of sunflower), this protein is Secreted RxLR effector protein RXLR-C22.